We begin with the raw amino-acid sequence, 185 residues long: Elongation factor P (185 aa).

The protein belongs to the elongation factor P family.

Its subcellular location is the cytoplasm. Its pathway is protein biosynthesis; polypeptide chain elongation. In terms of biological role, involved in peptide bond synthesis. Stimulates efficient translation and peptide-bond synthesis on native or reconstituted 70S ribosomes in vitro. Probably functions indirectly by altering the affinity of the ribosome for aminoacyl-tRNA, thus increasing their reactivity as acceptors for peptidyl transferase. The protein is Elongation factor P of Oleidesulfovibrio alaskensis (strain ATCC BAA-1058 / DSM 17464 / G20) (Desulfovibrio alaskensis).